The sequence spans 370 residues: UDP-N-acetylglucosamine--N-acetylmuramyl-(pentapeptide) pyrophosphoryl-undecaprenol N-acetylglucosamine transferase (370 aa).

UDP-N-acetyl-alpha-D-glucosamine-binding positions include 10–12, asparagine 126, serine 200, isoleucine 255, and glutamine 300; that span reads TGG.

This sequence belongs to the glycosyltransferase 28 family. MurG subfamily.

The protein localises to the cell membrane. The catalysed reaction is Mur2Ac(oyl-L-Ala-gamma-D-Glu-L-Lys-D-Ala-D-Ala)-di-trans,octa-cis-undecaprenyl diphosphate + UDP-N-acetyl-alpha-D-glucosamine = beta-D-GlcNAc-(1-&gt;4)-Mur2Ac(oyl-L-Ala-gamma-D-Glu-L-Lys-D-Ala-D-Ala)-di-trans,octa-cis-undecaprenyl diphosphate + UDP + H(+). Its pathway is cell wall biogenesis; peptidoglycan biosynthesis. Functionally, cell wall formation. Catalyzes the transfer of a GlcNAc subunit on undecaprenyl-pyrophosphoryl-MurNAc-pentapeptide (lipid intermediate I) to form undecaprenyl-pyrophosphoryl-MurNAc-(pentapeptide)GlcNAc (lipid intermediate II). In Lactobacillus johnsonii (strain CNCM I-12250 / La1 / NCC 533), this protein is UDP-N-acetylglucosamine--N-acetylmuramyl-(pentapeptide) pyrophosphoryl-undecaprenol N-acetylglucosamine transferase.